We begin with the raw amino-acid sequence, 49 residues long: uncharacterized protein (49 aa).

It belongs to the ELIP/psbS family.

The protein resides in the plastid. It localises to the cyanelle. Functionally, possible role in chlorophyll and/or carotenoid binding. This is an uncharacterized protein from Cyanophora paradoxa.